The sequence spans 216 residues: Uracil phosphoribosyltransferase (216 aa).

Residues Arg-85, Arg-110, and 135 to 143 (DPMVATGYS) each bind 5-phospho-alpha-D-ribose 1-diphosphate. Uracil is bound by residues Ile-200 and 205 to 207 (GDA). 5-phospho-alpha-D-ribose 1-diphosphate is bound at residue Asp-206.

The protein belongs to the UPRTase family. Mg(2+) serves as cofactor.

It carries out the reaction UMP + diphosphate = 5-phospho-alpha-D-ribose 1-diphosphate + uracil. It functions in the pathway pyrimidine metabolism; UMP biosynthesis via salvage pathway; UMP from uracil: step 1/1. Allosterically activated by GTP. Functionally, catalyzes the conversion of uracil and 5-phospho-alpha-D-ribose 1-diphosphate (PRPP) to UMP and diphosphate. In Paraburkholderia phytofirmans (strain DSM 17436 / LMG 22146 / PsJN) (Burkholderia phytofirmans), this protein is Uracil phosphoribosyltransferase.